The following is a 341-amino-acid chain: Biotin synthase (341 aa).

Residues 40-267 (AEIQVSTLLS…RSMVRLSAGR (228 aa)) enclose the Radical SAM core domain. C55, C59, and C62 together coordinate [4Fe-4S] cluster. 4 residues coordinate [2Fe-2S] cluster: C99, C130, C190, and R262.

Belongs to the radical SAM superfamily. Biotin synthase family. As to quaternary structure, homodimer. [4Fe-4S] cluster serves as cofactor. [2Fe-2S] cluster is required as a cofactor.

The catalysed reaction is (4R,5S)-dethiobiotin + (sulfur carrier)-SH + 2 reduced [2Fe-2S]-[ferredoxin] + 2 S-adenosyl-L-methionine = (sulfur carrier)-H + biotin + 2 5'-deoxyadenosine + 2 L-methionine + 2 oxidized [2Fe-2S]-[ferredoxin]. It functions in the pathway cofactor biosynthesis; biotin biosynthesis; biotin from 7,8-diaminononanoate: step 2/2. Catalyzes the conversion of dethiobiotin (DTB) to biotin by the insertion of a sulfur atom into dethiobiotin via a radical-based mechanism. This Xylella fastidiosa (strain 9a5c) protein is Biotin synthase.